Here is a 127-residue protein sequence, read N- to C-terminus: Fluoride-specific ion channel FluC (127 aa).

The next 4 helical transmembrane spans lie at 4–24, 38–58, 71–91, and 104–124; these read LSVLGFIALGGAFGACSRYLI, YGTLTVNVVGSFIMGLLIAAF, IIGLGFLGALTTFSTFSMDNV, and LNVLLNVVLSISAAWIGFQLL. The Na(+) site is built by G78 and T81.

It belongs to the fluoride channel Fluc/FEX (TC 1.A.43) family.

It is found in the cell inner membrane. The catalysed reaction is fluoride(in) = fluoride(out). Na(+) is not transported, but it plays an essential structural role and its presence is essential for fluoride channel function. Fluoride-specific ion channel. Important for reducing fluoride concentration in the cell, thus reducing its toxicity. This Vibrio campbellii (strain ATCC BAA-1116) protein is Fluoride-specific ion channel FluC.